The primary structure comprises 346 residues: tRNA-specific 2-thiouridylase MnmA (346 aa).

A6 to S13 serves as a coordination point for ATP. C90 functions as the Nucleophile in the catalytic mechanism. An intrachain disulfide couples C90 to C187. G114 provides a ligand contact to ATP. Positions K137–Q139 are interaction with tRNA. C187 (cysteine persulfide intermediate) is an active-site residue. The interval R292–Y293 is interaction with tRNA.

This sequence belongs to the MnmA/TRMU family.

The protein resides in the cytoplasm. It catalyses the reaction S-sulfanyl-L-cysteinyl-[protein] + uridine(34) in tRNA + AH2 + ATP = 2-thiouridine(34) in tRNA + L-cysteinyl-[protein] + A + AMP + diphosphate + H(+). Functionally, catalyzes the 2-thiolation of uridine at the wobble position (U34) of tRNA, leading to the formation of s(2)U34. This Nitratidesulfovibrio vulgaris (strain ATCC 29579 / DSM 644 / CCUG 34227 / NCIMB 8303 / VKM B-1760 / Hildenborough) (Desulfovibrio vulgaris) protein is tRNA-specific 2-thiouridylase MnmA.